The primary structure comprises 166 residues: Succinate dehydrogenase [ubiquinone] cytochrome b small subunit, mitochondrial (166 aa).

Residues Met1–Ser65 are Mitochondrial matrix-facing. A helical transmembrane segment spans residues Tyr66–Ala87. Residues Ala88–Thr94 are Mitochondrial intermembrane-facing. Residues Met95–Ile115 form a helical membrane-spanning segment. His106 serves as a coordination point for heme. Topologically, residues Val116–Val124 are mitochondrial matrix. Tyr118 lines the a ubiquinone pocket. A helical transmembrane segment spans residues Pro125–Phe149. The Mitochondrial intermembrane portion of the chain corresponds to Glu150–Ala166.

This sequence belongs to the CybS family. In terms of assembly, forms part of complex II containing four subunits: a flavoprotein (FP), an iron-sulfur protein (IP) and a cytochrome b composed of a large and a small subunit.

The protein resides in the mitochondrion inner membrane. It participates in carbohydrate metabolism; tricarboxylic acid cycle. Its function is as follows. Membrane-anchoring subunit of succinate dehydrogenase (SDH) that is involved in complex II of the mitochondrial electron transport chain and is responsible for transferring electrons from succinate to ubiquinone (coenzyme Q). This chain is Succinate dehydrogenase [ubiquinone] cytochrome b small subunit, mitochondrial, found in Neurospora crassa (strain ATCC 24698 / 74-OR23-1A / CBS 708.71 / DSM 1257 / FGSC 987).